Consider the following 106-residue polypeptide: Large ribosomal subunit protein bL21 (106 aa).

This sequence belongs to the bacterial ribosomal protein bL21 family. As to quaternary structure, part of the 50S ribosomal subunit. Contacts protein L20.

Its function is as follows. This protein binds to 23S rRNA in the presence of protein L20. The polypeptide is Large ribosomal subunit protein bL21 (Xylella fastidiosa (strain Temecula1 / ATCC 700964)).